A 93-amino-acid polypeptide reads, in one-letter code: Phosphoribosyl-ATP pyrophosphatase (93 aa).

Belongs to the PRA-PH family.

It localises to the cytoplasm. It catalyses the reaction 1-(5-phospho-beta-D-ribosyl)-ATP + H2O = 1-(5-phospho-beta-D-ribosyl)-5'-AMP + diphosphate + H(+). Its pathway is amino-acid biosynthesis; L-histidine biosynthesis; L-histidine from 5-phospho-alpha-D-ribose 1-diphosphate: step 2/9. The polypeptide is Phosphoribosyl-ATP pyrophosphatase (Metallosphaera sedula (strain ATCC 51363 / DSM 5348 / JCM 9185 / NBRC 15509 / TH2)).